Consider the following 120-residue polypeptide: Large ribosomal subunit protein bL17 (120 aa).

It belongs to the bacterial ribosomal protein bL17 family. Part of the 50S ribosomal subunit. Contacts protein L32.

This chain is Large ribosomal subunit protein bL17, found in Halalkalibacterium halodurans (strain ATCC BAA-125 / DSM 18197 / FERM 7344 / JCM 9153 / C-125) (Bacillus halodurans).